The primary structure comprises 362 residues: tRNA-specific 2-thiouridylase MnmA 3 (362 aa).

Residues Gly-11–Ser-18 and Met-37 each bind ATP. The Nucleophile role is filled by Cys-91. A disulfide bond links Cys-91 and Cys-188. Gly-115 provides a ligand contact to ATP. Positions Lys-137–Gln-139 are interaction with tRNA. Cys-188 functions as the Cysteine persulfide intermediate in the catalytic mechanism. The tract at residues Arg-296 to Tyr-297 is interaction with tRNA.

The protein belongs to the MnmA/TRMU family.

It localises to the cytoplasm. The enzyme catalyses S-sulfanyl-L-cysteinyl-[protein] + uridine(34) in tRNA + AH2 + ATP = 2-thiouridine(34) in tRNA + L-cysteinyl-[protein] + A + AMP + diphosphate + H(+). Functionally, catalyzes the 2-thiolation of uridine at the wobble position (U34) of tRNA, leading to the formation of s(2)U34. This is tRNA-specific 2-thiouridylase MnmA 3 from Bacteroides fragilis (strain ATCC 25285 / DSM 2151 / CCUG 4856 / JCM 11019 / LMG 10263 / NCTC 9343 / Onslow / VPI 2553 / EN-2).